A 301-amino-acid chain; its full sequence is Probable aspartoacylase (301 aa).

Positions 13 and 16 each coordinate Zn(2+). Residues Arg54 and 61-62 contribute to the substrate site; that span reads NR. Zn(2+) is bound at residue His105. Substrate is bound by residues Glu163 and Tyr273.

This sequence belongs to the AspA/AstE family. Aspartoacylase subfamily. It depends on Zn(2+) as a cofactor.

The catalysed reaction is an N-acyl-L-aspartate + H2O = a carboxylate + L-aspartate. The polypeptide is Probable aspartoacylase (Prochlorococcus marinus (strain AS9601)).